Consider the following 310-residue polypeptide: Cysteine synthase (310 aa).

N6-(pyridoxal phosphate)lysine is present on Lys46. Residues Asn76, 180–184 (GTGGT), and Ser268 each bind pyridoxal 5'-phosphate.

It belongs to the cysteine synthase/cystathionine beta-synthase family. As to quaternary structure, homodimer. Pyridoxal 5'-phosphate is required as a cofactor.

It catalyses the reaction O-acetyl-L-serine + hydrogen sulfide = L-cysteine + acetate. Its pathway is amino-acid biosynthesis; L-cysteine biosynthesis; L-cysteine from L-serine: step 2/2. The protein is Cysteine synthase (cysK) of Staphylococcus epidermidis (strain ATCC 35984 / DSM 28319 / BCRC 17069 / CCUG 31568 / BM 3577 / RP62A).